A 383-amino-acid polypeptide reads, in one-letter code: Protein KES1 (383 aa).

The span at 317–339 (FETASKDKARIENAQRQKRKDEA) shows a compositional bias: basic and acidic residues. The segment at 317–346 (FETASKDKARIENAQRQKRKDEAAAGTPHQ) is disordered.

The protein belongs to the OSBP family.

Lipid transporter involved in lipid countertransport between the Golgi complex and membranes of the endoplasmic reticulum: specifically exchanges sterol with phosphatidylinositol 4-phosphate (PI4P), delivering sterol to the Golgi in exchange for PI4P, which is degraded by the SAC1 phosphatase in the endoplasmic reticulum. This Mycosarcoma maydis (Corn smut fungus) protein is Protein KES1 (KES1).